Consider the following 268-residue polypeptide: uncharacterized protein (268 aa).

A disordered region spans residues Ser-45 to Ala-64.

This is an uncharacterized protein from Aquifex aeolicus (strain VF5).